The primary structure comprises 160 residues: Cytochrome b6-f complex subunit 4 (160 aa).

The next 3 helical transmembrane spans lie at 36 to 56, 95 to 115, and 131 to 151; these read LLYI…GLAV, LLGV…PFLE, and TVFL…TLPI.

The protein belongs to the cytochrome b family. PetD subfamily. In terms of assembly, the 4 large subunits of the cytochrome b6-f complex are cytochrome b6, subunit IV (17 kDa polypeptide, petD), cytochrome f and the Rieske protein, while the 4 small subunits are petG, petL, petM and petN. The complex functions as a dimer.

The protein resides in the plastid. Its subcellular location is the chloroplast thylakoid membrane. Component of the cytochrome b6-f complex, which mediates electron transfer between photosystem II (PSII) and photosystem I (PSI), cyclic electron flow around PSI, and state transitions. This Lotus japonicus (Lotus corniculatus var. japonicus) protein is Cytochrome b6-f complex subunit 4.